Here is a 269-residue protein sequence, read N- to C-terminus: Formamidopyrimidine-DNA glycosylase (269 aa).

Catalysis depends on proline 2, which acts as the Schiff-base intermediate with DNA. The Proton donor role is filled by glutamate 3. The active-site Proton donor; for beta-elimination activity is lysine 57. Residues histidine 90, arginine 109, and lysine 150 each coordinate DNA. The FPG-type zinc finger occupies 235 to 269; that stretch reads QVYGRKGEPCRVCGTPIVATKHAQRATFYCRQCQK. The active-site Proton donor; for delta-elimination activity is the arginine 259.

This sequence belongs to the FPG family. In terms of assembly, monomer. Zn(2+) is required as a cofactor.

The enzyme catalyses Hydrolysis of DNA containing ring-opened 7-methylguanine residues, releasing 2,6-diamino-4-hydroxy-5-(N-methyl)formamidopyrimidine.. It carries out the reaction 2'-deoxyribonucleotide-(2'-deoxyribose 5'-phosphate)-2'-deoxyribonucleotide-DNA = a 3'-end 2'-deoxyribonucleotide-(2,3-dehydro-2,3-deoxyribose 5'-phosphate)-DNA + a 5'-end 5'-phospho-2'-deoxyribonucleoside-DNA + H(+). Involved in base excision repair of DNA damaged by oxidation or by mutagenic agents. Acts as a DNA glycosylase that recognizes and removes damaged bases. Has a preference for oxidized purines, such as 7,8-dihydro-8-oxoguanine (8-oxoG). Has AP (apurinic/apyrimidinic) lyase activity and introduces nicks in the DNA strand. Cleaves the DNA backbone by beta-delta elimination to generate a single-strand break at the site of the removed base with both 3'- and 5'-phosphates. This is Formamidopyrimidine-DNA glycosylase from Shigella dysenteriae serotype 1 (strain Sd197).